The chain runs to 664 residues: DNA topoisomerase 4 subunit B (664 aa).

Residues Tyr7, Asn47, Asp74, 114–120 (GLHGVGA), and Lys341 each bind ATP. Positions 386-418 (REAARKAREDARSGKKNKRKDTLLSGKLTPAQS) are disordered. Positions 387–398 (EAARKAREDARS) are enriched in basic and acidic residues. The 115-residue stretch at 424–538 (NELYLVEGDS…AGRVFIALPP (115 aa)) folds into the Toprim domain. Residues Glu430, Asp503, and Asp505 each contribute to the Mg(2+) site.

The protein belongs to the type II topoisomerase family. ParE type 2 subfamily. As to quaternary structure, heterotetramer composed of ParC and ParE. Mg(2+) is required as a cofactor. The cofactor is Mn(2+). Requires Ca(2+) as cofactor.

It carries out the reaction ATP-dependent breakage, passage and rejoining of double-stranded DNA.. Topoisomerase IV is essential for chromosome segregation. It relaxes supercoiled DNA. Performs the decatenation events required during the replication of a circular DNA molecule. The sequence is that of DNA topoisomerase 4 subunit B from Staphylococcus epidermidis (strain ATCC 35984 / DSM 28319 / BCRC 17069 / CCUG 31568 / BM 3577 / RP62A).